Reading from the N-terminus, the 397-residue chain is Elongation factor Tu (397 aa).

Residues 10–206 form the tr-type G domain; the sequence is KPHVNIGTIG…AVDEAIPTPP (197 aa). Residues 19–26 form a G1 region; the sequence is GHIDHGKT. 19–26 lines the GTP pocket; that stretch reads GHIDHGKT. Residue T26 participates in Mg(2+) binding. A G2 region spans residues 62-66; sequence GITIS. Residues 83–86 form a G3 region; it reads DCPG. Residues 83–87 and 138–141 contribute to the GTP site; these read DCPGH and NKAD. The segment at 138-141 is G4; that stretch reads NKAD. Residues 176 to 178 are G5; it reads SAL.

It belongs to the TRAFAC class translation factor GTPase superfamily. Classic translation factor GTPase family. EF-Tu/EF-1A subfamily. Monomer.

The protein localises to the cytoplasm. The enzyme catalyses GTP + H2O = GDP + phosphate + H(+). GTP hydrolase that promotes the GTP-dependent binding of aminoacyl-tRNA to the A-site of ribosomes during protein biosynthesis. The chain is Elongation factor Tu from Kitasatospora aureofaciens (Streptomyces aureofaciens).